Reading from the N-terminus, the 264-residue chain is H-2 class II histocompatibility antigen, E-B beta chain (264 aa).

The N-terminal stretch at 1–26 is a signal peptide; it reads MVWLPRVPCVAAVILLLTVLSPPMAL. Positions 27–121 are beta-1; that stretch reads VRDSRPWFLE…ISDKFLVRRR (95 aa). Residues 27–225 are Extracellular-facing; sequence VRDSRPWFLE…KAQSTSAQNK (199 aa). Cystine bridges form between cysteine 38-cysteine 106 and cysteine 144-cysteine 200. Residue asparagine 46 is glycosylated (N-linked (GlcNAc...) asparagine). The tract at residues 122 to 225 is beta-2; that stretch reads VEPTVTVYPT…KAQSTSAQNK (104 aa). Residues 124–214 form the Ig-like C1-type domain; sequence PTVTVYPTKT…PSLTDPVTVE (91 aa). A helical transmembrane segment spans residues 226 to 246; the sequence is MLSGVGGFVLGLLFLGAGLFI. The Cytoplasmic segment spans residues 247–264; it reads YFRNQKGQSGLQPTGLLS.

This sequence belongs to the MHC class II family. Ubiquitinated in immature dendritic cells leading to down-regulation of MHC class II.

It is found in the membrane. The polypeptide is H-2 class II histocompatibility antigen, E-B beta chain (H2-Eb1) (Mus musculus (Mouse)).